Here is a 237-residue protein sequence, read N- to C-terminus: Purine nucleoside phosphorylase DeoD-type (237 aa).

H4 is a binding site for a purine D-ribonucleoside. Residues G20, R24, R43, and 87–90 (RVGT) each bind phosphate. A purine D-ribonucleoside contacts are provided by residues 179–181 (EME) and 203–204 (SD). D204 serves as the catalytic Proton donor.

This sequence belongs to the PNP/UDP phosphorylase family. Homohexamer; trimer of homodimers.

The catalysed reaction is a purine D-ribonucleoside + phosphate = a purine nucleobase + alpha-D-ribose 1-phosphate. The enzyme catalyses a purine 2'-deoxy-D-ribonucleoside + phosphate = a purine nucleobase + 2-deoxy-alpha-D-ribose 1-phosphate. Its function is as follows. Catalyzes the reversible phosphorolytic breakdown of the N-glycosidic bond in the beta-(deoxy)ribonucleoside molecules, with the formation of the corresponding free purine bases and pentose-1-phosphate. This chain is Purine nucleoside phosphorylase DeoD-type, found in Streptococcus pyogenes serotype M12 (strain MGAS2096).